A 393-amino-acid chain; its full sequence is S-adenosylmethionine synthase 2 (393 aa).

Residue Glu-9 participates in Mg(2+) binding. His-15 provides a ligand contact to ATP. Residue Glu-43 participates in K(+) binding. L-methionine is bound by residues Glu-56 and Gln-99. Residues 167 to 169 (DGK), 235 to 238 (SGRF), Asp-246, 252 to 253 (RK), Ala-269, Lys-273, and Lys-277 contribute to the ATP site. Asp-246 contacts L-methionine. L-methionine is bound at residue Lys-277.

The protein belongs to the AdoMet synthase family. Homotetramer. Mn(2+) is required as a cofactor. Requires Mg(2+) as cofactor. It depends on Co(2+) as a cofactor. The cofactor is K(+). Mostly expressed in roots. Also present in stems and leaves.

Its subcellular location is the cytoplasm. It catalyses the reaction L-methionine + ATP + H2O = S-adenosyl-L-methionine + phosphate + diphosphate. It participates in amino-acid biosynthesis; S-adenosyl-L-methionine biosynthesis; S-adenosyl-L-methionine from L-methionine: step 1/1. Functionally, catalyzes the formation of S-adenosylmethionine from methionine and ATP. The reaction comprises two steps that are both catalyzed by the same enzyme: formation of S-adenosylmethionine (AdoMet) and triphosphate, and subsequent hydrolysis of the triphosphate. The chain is S-adenosylmethionine synthase 2 (SAM2) from Solanum lycopersicum (Tomato).